Reading from the N-terminus, the 444-residue chain is Phosphoglucosamine mutase (444 aa).

The active-site Phosphoserine intermediate is the serine 104. Mg(2+)-binding residues include serine 104, aspartate 243, aspartate 245, and aspartate 247. Residue serine 104 is modified to Phosphoserine.

This sequence belongs to the phosphohexose mutase family. Mg(2+) is required as a cofactor. Post-translationally, activated by phosphorylation.

The enzyme catalyses alpha-D-glucosamine 1-phosphate = D-glucosamine 6-phosphate. In terms of biological role, catalyzes the conversion of glucosamine-6-phosphate to glucosamine-1-phosphate. In Neisseria meningitidis serogroup C / serotype 2a (strain ATCC 700532 / DSM 15464 / FAM18), this protein is Phosphoglucosamine mutase.